The primary structure comprises 434 residues: UDP-glucose 6-dehydrogenase (434 aa).

NAD(+) contacts are provided by residues 2–19 (NITF…GVMM), valine 11, aspartate 30, lysine 35, threonine 121, and glutamate 152. Residues 148–152 (EFLRE), lysine 204, asparagine 208, 249–253 (FLNAG), and glycine 257 each bind substrate. The active-site Nucleophile is the cysteine 260. Residue lysine 263 coordinates NAD(+). Lysine 321 contacts substrate. Arginine 328 is a binding site for NAD(+).

This sequence belongs to the UDP-glucose/GDP-mannose dehydrogenase family.

It carries out the reaction UDP-alpha-D-glucose + 2 NAD(+) + H2O = UDP-alpha-D-glucuronate + 2 NADH + 3 H(+). The protein operates within nucleotide-sugar biosynthesis; UDP-alpha-D-glucuronate biosynthesis; UDP-alpha-D-glucuronate from UDP-alpha-D-glucose: step 1/1. The chain is UDP-glucose 6-dehydrogenase (udg) from Rickettsia bellii (strain RML369-C).